We begin with the raw amino-acid sequence, 351 residues long: Photosystem II D2 protein (351 aa).

A helical transmembrane segment spans residues 39-59; that stretch reads TAYLAIGGWLTGTTFVTSWYT. Chlorophyll a is bound at residue His-116. A helical transmembrane segment spans residues 123-139; sequence GFMLRQFEIARLVGIRP. The pheophytin a site is built by Gln-128 and Asn-141. The helical transmembrane segment at 151–164 threads the bilayer; the sequence is VFVSVFLMYPLGQS. Chlorophyll a is bound at residue His-196. The chain crosses the membrane as a helical span at residues 206–226; sequence GALLCAIHGATVENTLFEDGE. The a plastoquinone site is built by His-213 and Phe-260. His-213 is a binding site for Fe cation. His-267 provides a ligand contact to Fe cation. Residues 277–293 traverse the membrane as a helical segment; sequence GLWTSSIGIIGLALNLR.

It belongs to the reaction center PufL/M/PsbA/D family. PSII is composed of 1 copy each of membrane proteins PsbA, PsbB, PsbC, PsbD, PsbE, PsbF, PsbH, PsbI, PsbJ, PsbK, PsbL, PsbM, PsbT, PsbX, PsbY, PsbZ, Psb30/Ycf12, peripheral proteins PsbO, CyanoQ (PsbQ), PsbU, PsbV and a large number of cofactors. It forms dimeric complexes. It depends on The D1/D2 heterodimer binds P680, chlorophylls that are the primary electron donor of PSII, and subsequent electron acceptors. It shares a non-heme iron and each subunit binds pheophytin, quinone, additional chlorophylls, carotenoids and lipids. There is also a Cl(-1) ion associated with D1 and D2, which is required for oxygen evolution. The PSII complex binds additional chlorophylls, carotenoids and specific lipids. as a cofactor.

It is found in the cellular thylakoid membrane. The catalysed reaction is 2 a plastoquinone + 4 hnu + 2 H2O = 2 a plastoquinol + O2. In terms of biological role, photosystem II (PSII) is a light-driven water:plastoquinone oxidoreductase that uses light energy to abstract electrons from H(2)O, generating O(2) and a proton gradient subsequently used for ATP formation. It consists of a core antenna complex that captures photons, and an electron transfer chain that converts photonic excitation into a charge separation. The D1/D2 (PsbA/PsbD) reaction center heterodimer binds P680, the primary electron donor of PSII as well as several subsequent electron acceptors. D2 is needed for assembly of a stable PSII complex. This is Photosystem II D2 protein from Synechococcus sp. (strain WH7803).